The sequence spans 476 residues: Eukaryotic translation initiation factor 3 subunit L (476 aa).

One can recognise a PCI domain in the interval 257–452; sequence DAIRMFSHIL…DLDYALEKDL (196 aa).

This sequence belongs to the eIF-3 subunit L family. In terms of assembly, component of the eukaryotic translation initiation factor 3 (eIF-3) complex.

It localises to the cytoplasm. In terms of biological role, component of the eukaryotic translation initiation factor 3 (eIF-3) complex, which is involved in protein synthesis of a specialized repertoire of mRNAs and, together with other initiation factors, stimulates binding of mRNA and methionyl-tRNAi to the 40S ribosome. The eIF-3 complex specifically targets and initiates translation of a subset of mRNAs involved in cell proliferation. This chain is Eukaryotic translation initiation factor 3 subunit L, found in Aspergillus terreus (strain NIH 2624 / FGSC A1156).